The sequence spans 586 residues: 2-succinyl-5-enolpyruvyl-6-hydroxy-3-cyclohexene-1-carboxylate synthase (586 aa).

Belongs to the TPP enzyme family. MenD subfamily. In terms of assembly, homodimer. It depends on Mg(2+) as a cofactor. The cofactor is Mn(2+). Requires thiamine diphosphate as cofactor.

It carries out the reaction isochorismate + 2-oxoglutarate + H(+) = 5-enolpyruvoyl-6-hydroxy-2-succinyl-cyclohex-3-ene-1-carboxylate + CO2. It functions in the pathway quinol/quinone metabolism; 1,4-dihydroxy-2-naphthoate biosynthesis; 1,4-dihydroxy-2-naphthoate from chorismate: step 2/7. The protein operates within quinol/quinone metabolism; menaquinone biosynthesis. In terms of biological role, catalyzes the thiamine diphosphate-dependent decarboxylation of 2-oxoglutarate and the subsequent addition of the resulting succinic semialdehyde-thiamine pyrophosphate anion to isochorismate to yield 2-succinyl-5-enolpyruvyl-6-hydroxy-3-cyclohexene-1-carboxylate (SEPHCHC). The polypeptide is 2-succinyl-5-enolpyruvyl-6-hydroxy-3-cyclohexene-1-carboxylate synthase (Geobacillus thermodenitrificans (strain NG80-2)).